The following is a 111-amino-acid chain: Dormancy-associated protein 1 (111 aa).

The interval 30 to 60 (KDDGASNQLMRSTSIPTTPTTPVTPTTPSSA) is disordered. The segment covering 41 to 59 (STSIPTTPTTPVTPTTPSS) has biased composition (low complexity).

It belongs to the DRM1/ARP family. As to expression, expressed in axilary buds and in non-growing stems and roots. Detected in sepals, stamens and carpels, but barely detected in petals or leaflets.

This chain is Dormancy-associated protein 1, found in Pisum sativum (Garden pea).